The following is a 257-amino-acid chain: Probable enoyl-CoA hydratase echA17 (257 aa).

The protein belongs to the enoyl-CoA hydratase/isomerase family.

It catalyses the reaction a (3S)-3-hydroxyacyl-CoA = a (2E)-enoyl-CoA + H2O. The enzyme catalyses a 4-saturated-(3S)-3-hydroxyacyl-CoA = a (3E)-enoyl-CoA + H2O. Could possibly oxidize fatty acids using specific components. The polypeptide is Probable enoyl-CoA hydratase echA17 (echA17) (Mycolicibacterium paratuberculosis (strain ATCC BAA-968 / K-10) (Mycobacterium paratuberculosis)).